A 121-amino-acid chain; its full sequence is Small ribosomal subunit protein uS13 (121 aa).

The interval 99–121 (RGQRTRTNSRTRKGPRRKIMKKK) is disordered. Residues 101 to 121 (QRTRTNSRTRKGPRRKIMKKK) are compositionally biased toward basic residues.

The protein belongs to the universal ribosomal protein uS13 family. In terms of assembly, part of the 30S ribosomal subunit. Forms a loose heterodimer with protein S19. Forms two bridges to the 50S subunit in the 70S ribosome.

Functionally, located at the top of the head of the 30S subunit, it contacts several helices of the 16S rRNA. In the 70S ribosome it contacts the 23S rRNA (bridge B1a) and protein L5 of the 50S subunit (bridge B1b), connecting the 2 subunits; these bridges are implicated in subunit movement. Contacts the tRNAs in the A and P-sites. The protein is Small ribosomal subunit protein uS13 of Thermodesulfovibrio yellowstonii (strain ATCC 51303 / DSM 11347 / YP87).